The following is a 298-amino-acid chain: MKQELARIEQFLDALWLEKNLAENTLNAYRRDLSMMVEWLHHRGLTLATAQSDDLQALLAERLEGGYKATSSARLLSAVRRLFQYLYREKFREDDPSAHLASPKLPQRLPKDLSEAQVERLLQAPLIDQPLELRDKAMLEVLYATGLRVSELVGLTMSDISLRQGVVRVIGKGNKERLVPLGEEAVYWLETYLEHGRPWLLNGVSIDVLFPSQRAQQMTRQTFWHRIKHYAVLAGIDSEKLSPHVLRHAFATHLLNHGADLRVVQMLLGHSDLSTTQIYTHVATERLRQLHQQHHPRA.

The region spanning 2–87 is the Core-binding (CB) domain; the sequence is KQELARIEQF…AVRRLFQYLY (86 aa). The Tyr recombinase domain occupies 108–292; the sequence is RLPKDLSEAQ…ATERLRQLHQ (185 aa). Residues R148, K172, H244, R247, and H270 contribute to the active site. Y279 functions as the O-(3'-phospho-DNA)-tyrosine intermediate in the catalytic mechanism.

This sequence belongs to the 'phage' integrase family. XerD subfamily. As to quaternary structure, forms a cyclic heterotetrameric complex composed of two molecules of XerC and two molecules of XerD, in which XerC interacts with XerD via its C-terminal region, XerD interacts with XerC via its C-terminal region and so on.

It is found in the cytoplasm. With respect to regulation, ftsK may regulate the catalytic switch between XerC and XerD in the heterotetrameric complex during the two steps of the recombination process. Functionally, site-specific tyrosine recombinase, which acts by catalyzing the cutting and rejoining of the recombining DNA molecules. Binds cooperatively to specific DNA consensus sequences that are separated from XerC binding sites by a short central region, forming the heterotetrameric XerC-XerD complex that recombines DNA substrates. The complex is essential to convert dimers of the bacterial chromosome into monomers to permit their segregation at cell division. It also contributes to the segregational stability of plasmids. In the complex XerD specifically exchanges the bottom DNA strands. The protein is Tyrosine recombinase XerD of Shigella flexneri.